Here is a 2835-residue protein sequence, read N- to C-terminus: Vanchrobactin synthetase VabF (2835 aa).

The tract at residues 16–452 is condensation 1; sequence EDQWPLIGTQ…IPPSEKQQIT (437 aa). The tract at residues 473–880 is adenylation 1; sequence QQTVESKPNE…GRCDHQIKIR (408 aa). Residues 988-1062 enclose the Carrier 1 domain; that stretch reads APITQPEQLL…MMAGQMVPLQ (75 aa). The residue at position 1023 (Ser-1023) is an O-(pantetheine 4'-phosphoryl)serine. Condensation regions lie at residues 1081–1499 and 1539–1961; these read WFEE…KIQQ and DVLP…EWDL. Positions 1992 to 2394 are adenylation 2; that stretch reads QQQRSPHQLA…GRSDDQIKIR (403 aa). The Carrier 2 domain maps to 2503 to 2578; that stretch reads NAHPGLETQL…KLASLLLDDD (76 aa). Ser-2538 is subject to O-(pantetheine 4'-phosphoryl)serine. The tract at residues 2601 to 2821 is thioesterase; that stretch reads ALFCVNSASG…APENVRQIGE (221 aa).

The protein belongs to the NRP synthetase family. Pantetheine 4'-phosphate is required as a cofactor.

The catalysed reaction is holo-[peptidyl-carrier protein] + L-arginine + ATP = L-arginyl-[peptidyl-carrier protein] + AMP + diphosphate. The enzyme catalyses holo-[peptidyl-carrier protein] + L-serine + ATP = L-seryl-[peptidyl-carrier protein] + AMP + diphosphate. It functions in the pathway siderophore biosynthesis. Its function is as follows. Involved in the synthesis of the siderophore vanchrobactin. Probably adenylates L-arginine via its first adenylation domain and loads it onto its first peptidyl carrier domain via a thioester linkage to the phosphopanthetheine moiety. In addition, may adenylate L-serine via its second adenylation domain and loads it onto its second peptidyl carrier domain via a thioester linkage to the phosphopanthetheine moiety. The thioesterase domain may release vanchrobactin after condensation of the siderophore components. In Vibrio anguillarum (Listonella anguillarum), this protein is Vanchrobactin synthetase VabF.